Here is a 503-residue protein sequence, read N- to C-terminus: Lycopene beta cyclase, chloroplastic/chromoplastic (503 aa).

A chloroplast and chromoplast-targeting transit peptide spans 1–85; sequence MDTLLRTHNR…DLPLYDPSKA (85 aa). Position 90-117 (90-117) interacts with NAD(+); sequence LAVVGGGPLARSCSTSLGGGLSVVSIDP.

Belongs to the lycopene cyclase family.

It is found in the plastid. The protein resides in the chloroplast. The protein localises to the chromoplast. Its subcellular location is the chromoplast membrane. It localises to the chloroplast membrane. The catalysed reaction is a carotenoid psi-end group = a carotenoid beta-end derivative. The protein operates within carotenoid biosynthesis; beta-carotene biosynthesis. It functions in the pathway carotenoid biosynthesis; beta-zeacarotene biosynthesis. Functionally, catalyzes the double cyclization reaction which converts lycopene to beta-carotene and neurosporene to beta-zeacarotene. This Narcissus pseudonarcissus (Daffodil) protein is Lycopene beta cyclase, chloroplastic/chromoplastic (LCY1).